The sequence spans 376 residues: UDP-N-acetylglucosamine--N-acetylmuramyl-(pentapeptide) pyrophosphoryl-undecaprenol N-acetylglucosamine transferase (376 aa).

UDP-N-acetyl-alpha-D-glucosamine is bound by residues 11-13 (TGG), N117, R160, S208, and Q310.

Belongs to the glycosyltransferase 28 family. MurG subfamily.

Its subcellular location is the cell inner membrane. The catalysed reaction is di-trans,octa-cis-undecaprenyl diphospho-N-acetyl-alpha-D-muramoyl-L-alanyl-D-glutamyl-meso-2,6-diaminopimeloyl-D-alanyl-D-alanine + UDP-N-acetyl-alpha-D-glucosamine = di-trans,octa-cis-undecaprenyl diphospho-[N-acetyl-alpha-D-glucosaminyl-(1-&gt;4)]-N-acetyl-alpha-D-muramoyl-L-alanyl-D-glutamyl-meso-2,6-diaminopimeloyl-D-alanyl-D-alanine + UDP + H(+). The protein operates within cell wall biogenesis; peptidoglycan biosynthesis. Functionally, cell wall formation. Catalyzes the transfer of a GlcNAc subunit on undecaprenyl-pyrophosphoryl-MurNAc-pentapeptide (lipid intermediate I) to form undecaprenyl-pyrophosphoryl-MurNAc-(pentapeptide)GlcNAc (lipid intermediate II). This is UDP-N-acetylglucosamine--N-acetylmuramyl-(pentapeptide) pyrophosphoryl-undecaprenol N-acetylglucosamine transferase from Rickettsia africae (strain ESF-5).